The following is an 89-amino-acid chain: Small ribosomal subunit protein uS15 (89 aa).

Residues 1–21 (MSLHQERKSELVSKFRTHESD) show a composition bias toward basic and acidic residues. Residues 1–25 (MSLHQERKSELVSKFRTHESDTGSP) are disordered.

This sequence belongs to the universal ribosomal protein uS15 family. Part of the 30S ribosomal subunit. Forms a bridge to the 50S subunit in the 70S ribosome, contacting the 23S rRNA.

In terms of biological role, one of the primary rRNA binding proteins, it binds directly to 16S rRNA where it helps nucleate assembly of the platform of the 30S subunit by binding and bridging several RNA helices of the 16S rRNA. Functionally, forms an intersubunit bridge (bridge B4) with the 23S rRNA of the 50S subunit in the ribosome. The polypeptide is Small ribosomal subunit protein uS15 (Myxococcus xanthus (strain DK1622)).